The chain runs to 306 residues: Phospho-N-acetylmuramoyl-pentapeptide-transferase (306 aa).

10 helical membrane passes run 1 to 21, 49 to 69, 75 to 95, 104 to 124, 130 to 150, 160 to 180, 182 to 202, 209 to 229, 234 to 254, and 284 to 304; these read MDIY…IIFP, GTPT…GLIL, LIFT…VSIV, AWQK…TILQ, IFGI…LVSG, GIDG…MFFS, SSME…FLVY, VFMG…YALM, LSLL…ILQV, and IVGV…AFFL.

This sequence belongs to the glycosyltransferase 4 family. MraY subfamily. Requires Mg(2+) as cofactor.

It is found in the cell inner membrane. It catalyses the reaction UDP-N-acetyl-alpha-D-muramoyl-L-alanyl-gamma-D-glutamyl-meso-2,6-diaminopimeloyl-D-alanyl-D-alanine + di-trans,octa-cis-undecaprenyl phosphate = di-trans,octa-cis-undecaprenyl diphospho-N-acetyl-alpha-D-muramoyl-L-alanyl-D-glutamyl-meso-2,6-diaminopimeloyl-D-alanyl-D-alanine + UMP. It functions in the pathway cell wall biogenesis; peptidoglycan biosynthesis. Catalyzes the initial step of the lipid cycle reactions in the biosynthesis of the cell wall peptidoglycan: transfers peptidoglycan precursor phospho-MurNAc-pentapeptide from UDP-MurNAc-pentapeptide onto the lipid carrier undecaprenyl phosphate, yielding undecaprenyl-pyrophosphoryl-MurNAc-pentapeptide, known as lipid I. The polypeptide is Phospho-N-acetylmuramoyl-pentapeptide-transferase (Fervidobacterium nodosum (strain ATCC 35602 / DSM 5306 / Rt17-B1)).